We begin with the raw amino-acid sequence, 314 residues long: Malate dehydrogenase (314 aa).

Residues 12–17 (GAGFTG) and Asp36 each bind NAD(+). Residues Arg87 and Arg93 each contribute to the substrate site. Residues Asn100 and 123 to 125 (LTN) contribute to the NAD(+) site. Position 125 (Asn125) interacts with substrate. Ser149 carries the post-translational modification Phosphoserine. Substrate is bound at residue Arg156. The Proton acceptor role is filled by His180.

This sequence belongs to the LDH/MDH superfamily. MDH type 3 family.

The enzyme catalyses (S)-malate + NAD(+) = oxaloacetate + NADH + H(+). Its function is as follows. Catalyzes the reversible oxidation of malate to oxaloacetate. The sequence is that of Malate dehydrogenase from Halalkalibacterium halodurans (strain ATCC BAA-125 / DSM 18197 / FERM 7344 / JCM 9153 / C-125) (Bacillus halodurans).